The primary structure comprises 308 residues: uncharacterized protein (308 aa).

Positions 1–17 (MKSLALLLSLLINFSIG) are cleaved as a signal peptide. 4 N-linked (GlcNAc...) asparagine glycosylation sites follow: N13, N91, N159, and N210. Residues 213–308 (DEISGGTGAG…HDNYISSFCT (96 aa)) form a disordered region. Gly residues-rich tracts occupy residues 217 to 231 (GGTGAGDYSGTGSGS) and 239 to 252 (SDGGSSGSGSGSGS). Positions 267 to 284 (NKNNNKNKNNNNNNNNYN) are enriched in low complexity.

The protein localises to the secreted. This is an uncharacterized protein from Dictyostelium discoideum (Social amoeba).